A 328-amino-acid chain; its full sequence is D-alanine--D-alanine ligase (328 aa).

Positions 118–317 (LSVLTKFNIP…MPQMLDNEIT (200 aa)) constitute an ATP-grasp domain. 146–201 (KKALGLPFFVKPNQSGSSLGVSKVDALDQLEKALEFAFAEDNEILIESYLNGTEVS) contributes to the ATP binding site. Asp-272, Glu-284, and Asn-286 together coordinate Mg(2+).

The protein belongs to the D-alanine--D-alanine ligase family. Requires Mg(2+) as cofactor. Mn(2+) serves as cofactor.

Its subcellular location is the cytoplasm. The enzyme catalyses 2 D-alanine + ATP = D-alanyl-D-alanine + ADP + phosphate + H(+). Its pathway is cell wall biogenesis; peptidoglycan biosynthesis. Its function is as follows. Cell wall formation. The polypeptide is D-alanine--D-alanine ligase (Flavobacterium psychrophilum (strain ATCC 49511 / DSM 21280 / CIP 103535 / JIP02/86)).